The sequence spans 103 residues: Protein translation factor SUI1 homolog (103 aa).

It belongs to the SUI1 family.

The protein is Protein translation factor SUI1 homolog of Methanocaldococcus jannaschii (strain ATCC 43067 / DSM 2661 / JAL-1 / JCM 10045 / NBRC 100440) (Methanococcus jannaschii).